Reading from the N-terminus, the 744-residue chain is Phosphoribosylformylglycinamidine synthase subunit PurL (744 aa).

The active site involves histidine 50. ATP is bound by residues tyrosine 53 and lysine 92. Glutamate 94 contacts Mg(2+). Substrate-binding positions include 95–98 and arginine 117; that span reads SHNH. Residue histidine 96 is the Proton acceptor of the active site. Position 118 (aspartate 118) interacts with Mg(2+). Glutamine 241 serves as a coordination point for substrate. Aspartate 269 contacts Mg(2+). Substrate is bound at residue 313-315; that stretch reads ESQ. Residues aspartate 495 and glycine 532 each coordinate ATP. Asparagine 533 serves as a coordination point for Mg(2+). Residue serine 535 coordinates substrate.

The protein belongs to the FGAMS family. Monomer. Part of the FGAM synthase complex composed of 1 PurL, 1 PurQ and 2 PurS subunits.

It is found in the cytoplasm. The enzyme catalyses N(2)-formyl-N(1)-(5-phospho-beta-D-ribosyl)glycinamide + L-glutamine + ATP + H2O = 2-formamido-N(1)-(5-O-phospho-beta-D-ribosyl)acetamidine + L-glutamate + ADP + phosphate + H(+). It functions in the pathway purine metabolism; IMP biosynthesis via de novo pathway; 5-amino-1-(5-phospho-D-ribosyl)imidazole from N(2)-formyl-N(1)-(5-phospho-D-ribosyl)glycinamide: step 1/2. In terms of biological role, part of the phosphoribosylformylglycinamidine synthase complex involved in the purines biosynthetic pathway. Catalyzes the ATP-dependent conversion of formylglycinamide ribonucleotide (FGAR) and glutamine to yield formylglycinamidine ribonucleotide (FGAM) and glutamate. The FGAM synthase complex is composed of three subunits. PurQ produces an ammonia molecule by converting glutamine to glutamate. PurL transfers the ammonia molecule to FGAR to form FGAM in an ATP-dependent manner. PurS interacts with PurQ and PurL and is thought to assist in the transfer of the ammonia molecule from PurQ to PurL. This is Phosphoribosylformylglycinamidine synthase subunit PurL from Rhizobium johnstonii (strain DSM 114642 / LMG 32736 / 3841) (Rhizobium leguminosarum bv. viciae).